A 115-amino-acid chain; its full sequence is Large ribosomal subunit protein bL19 (115 aa).

This sequence belongs to the bacterial ribosomal protein bL19 family.

This protein is located at the 30S-50S ribosomal subunit interface and may play a role in the structure and function of the aminoacyl-tRNA binding site. The chain is Large ribosomal subunit protein bL19 from Koribacter versatilis (strain Ellin345).